We begin with the raw amino-acid sequence, 343 residues long: Methionine import ATP-binding protein MetN 1 (343 aa).

An ABC transporter domain is found at 2 to 241 (IKLSNITKVF…PKTPLAQKFI (240 aa)). Position 38 to 45 (38 to 45 (GASGAGKS)) interacts with ATP.

This sequence belongs to the ABC transporter superfamily. Methionine importer (TC 3.A.1.24) family. The complex is composed of two ATP-binding proteins (MetN), two transmembrane proteins (MetI) and a solute-binding protein (MetQ).

It is found in the cell inner membrane. It carries out the reaction L-methionine(out) + ATP + H2O = L-methionine(in) + ADP + phosphate + H(+). The catalysed reaction is D-methionine(out) + ATP + H2O = D-methionine(in) + ADP + phosphate + H(+). In terms of biological role, part of the ABC transporter complex MetNIQ involved in methionine import. Responsible for energy coupling to the transport system. The chain is Methionine import ATP-binding protein MetN 1 from Salmonella typhi.